The chain runs to 953 residues: Valine--tRNA ligase (953 aa).

The 'HIGH' region motif lies at 42 to 52 (PNVTGSLHMGH). The short motif at 554-558 (KMSKS) is the 'KMSKS' region element. Lys-557 contacts ATP. Residues 884–953 (LIDKDAELAR…EAQKETIAAL (70 aa)) are a coiled coil.

The protein belongs to the class-I aminoacyl-tRNA synthetase family. ValS type 1 subfamily. Monomer.

The protein resides in the cytoplasm. It carries out the reaction tRNA(Val) + L-valine + ATP = L-valyl-tRNA(Val) + AMP + diphosphate. In terms of biological role, catalyzes the attachment of valine to tRNA(Val). As ValRS can inadvertently accommodate and process structurally similar amino acids such as threonine, to avoid such errors, it has a 'posttransfer' editing activity that hydrolyzes mischarged Thr-tRNA(Val) in a tRNA-dependent manner. The polypeptide is Valine--tRNA ligase (Photobacterium profundum (strain SS9)).